A 305-amino-acid polypeptide reads, in one-letter code: PI protein (305 aa).

This sequence belongs to the initiator RepB protein family. Homodimer.

Functionally, initiation for plasmid R6K DNA replication. The protein is PI protein (pir) of Escherichia coli.